A 453-amino-acid chain; its full sequence is Ribulose bisphosphate carboxylase large chain (453 aa).

A propeptide spanning residues 1-2 (MS) is cleaved from the precursor. Position 3 is an N-acetylproline (P3). K14 is subject to N6,N6,N6-trimethyllysine. Residues N123 and T173 each coordinate substrate. Residue K175 is the Proton acceptor of the active site. K177 serves as a coordination point for substrate. K201, D203, and E204 together coordinate Mg(2+). K201 is modified (N6-carboxylysine). Residue H294 is the Proton acceptor of the active site. Substrate contacts are provided by R295, H327, and S379.

Belongs to the RuBisCO large chain family. Type I subfamily. As to quaternary structure, heterohexadecamer of 8 large chains and 8 small chains; disulfide-linked. The disulfide link is formed within the large subunit homodimers. It depends on Mg(2+) as a cofactor. In terms of processing, the disulfide bond which can form in the large chain dimeric partners within the hexadecamer appears to be associated with oxidative stress and protein turnover.

Its subcellular location is the plastid. The protein localises to the chloroplast. It carries out the reaction 2 (2R)-3-phosphoglycerate + 2 H(+) = D-ribulose 1,5-bisphosphate + CO2 + H2O. The enzyme catalyses D-ribulose 1,5-bisphosphate + O2 = 2-phosphoglycolate + (2R)-3-phosphoglycerate + 2 H(+). In terms of biological role, ruBisCO catalyzes two reactions: the carboxylation of D-ribulose 1,5-bisphosphate, the primary event in carbon dioxide fixation, as well as the oxidative fragmentation of the pentose substrate in the photorespiration process. Both reactions occur simultaneously and in competition at the same active site. This is Ribulose bisphosphate carboxylase large chain from Crucianella angustifolia (Narrow-leaved crosswort).